We begin with the raw amino-acid sequence, 343 residues long: Ribosomal RNA small subunit methyltransferase C (343 aa).

Belongs to the methyltransferase superfamily. RsmC family. As to quaternary structure, monomer.

The protein resides in the cytoplasm. It carries out the reaction guanosine(1207) in 16S rRNA + S-adenosyl-L-methionine = N(2)-methylguanosine(1207) in 16S rRNA + S-adenosyl-L-homocysteine + H(+). Specifically methylates the guanine in position 1207 of 16S rRNA in the 30S particle. This chain is Ribosomal RNA small subunit methyltransferase C, found in Escherichia coli O17:K52:H18 (strain UMN026 / ExPEC).